A 96-amino-acid polypeptide reads, in one-letter code: Keratin-associated protein 12-1 (96 aa).

14 repeat units span residues 10–14 (CQPAC), 15–19 (CAPSP), 24–28 (CYIPV), 30–34 (CQSSV), 35–39 (CVPVS), 45–49 (CVPVR), 50–54 (CQSSV), 55–59 (CVPVS), 60–64 (CRPVV), 70–74 (CQSSG), 75–79 (CCQPS), 80–84 (CTSVL), 85–89 (CRPIS), and 90–94 (CSTPS). A 14 X 5 AA approximate repeats region spans residues 10-94 (CQPACCAPSP…CRPISCSTPS (85 aa)).

Belongs to the KRTAP type 12 family. As to quaternary structure, interacts with hair keratins. Restricted to a narrow region of the hair fiber cuticle, lying approximately 20 cell layers above the apex of the dermal papilla of the hair root; not detected in any other tissues.

In the hair cortex, hair keratin intermediate filaments are embedded in an interfilamentous matrix, consisting of hair keratin-associated proteins (KRTAP), which are essential for the formation of a rigid and resistant hair shaft through their extensive disulfide bond cross-linking with abundant cysteine residues of hair keratins. The matrix proteins include the high-sulfur and high-glycine-tyrosine keratins. The sequence is that of Keratin-associated protein 12-1 (KRTAP12-1) from Homo sapiens (Human).